Reading from the N-terminus, the 489-residue chain is Aspartyl/glutamyl-tRNA(Asn/Gln) amidotransferase subunit B (489 aa).

Belongs to the GatB/GatE family. GatB subfamily. As to quaternary structure, heterotrimer of A, B and C subunits.

It carries out the reaction L-glutamyl-tRNA(Gln) + L-glutamine + ATP + H2O = L-glutaminyl-tRNA(Gln) + L-glutamate + ADP + phosphate + H(+). The catalysed reaction is L-aspartyl-tRNA(Asn) + L-glutamine + ATP + H2O = L-asparaginyl-tRNA(Asn) + L-glutamate + ADP + phosphate + 2 H(+). In terms of biological role, allows the formation of correctly charged Asn-tRNA(Asn) or Gln-tRNA(Gln) through the transamidation of misacylated Asp-tRNA(Asn) or Glu-tRNA(Gln) in organisms which lack either or both of asparaginyl-tRNA or glutaminyl-tRNA synthetases. The reaction takes place in the presence of glutamine and ATP through an activated phospho-Asp-tRNA(Asn) or phospho-Glu-tRNA(Gln). The polypeptide is Aspartyl/glutamyl-tRNA(Asn/Gln) amidotransferase subunit B (Polynucleobacter asymbioticus (strain DSM 18221 / CIP 109841 / QLW-P1DMWA-1) (Polynucleobacter necessarius subsp. asymbioticus)).